Reading from the N-terminus, the 352-residue chain is Probable dual-specificity RNA methyltransferase RlmN (352 aa).

The active-site Proton acceptor is Glu-92. A Radical SAM core domain is found at Tyr-98–Asp-328. Cys-105 and Cys-333 are disulfide-bonded. The [4Fe-4S] cluster site is built by Cys-112, Cys-116, and Cys-119. Residues Gly-159–Glu-160, Ser-191, Ser-214–His-216, and Asn-290 contribute to the S-adenosyl-L-methionine site. Cys-333 acts as the S-methylcysteine intermediate in catalysis.

The protein belongs to the radical SAM superfamily. RlmN family. [4Fe-4S] cluster serves as cofactor.

It is found in the cytoplasm. The catalysed reaction is adenosine(2503) in 23S rRNA + 2 reduced [2Fe-2S]-[ferredoxin] + 2 S-adenosyl-L-methionine = 2-methyladenosine(2503) in 23S rRNA + 5'-deoxyadenosine + L-methionine + 2 oxidized [2Fe-2S]-[ferredoxin] + S-adenosyl-L-homocysteine. The enzyme catalyses adenosine(37) in tRNA + 2 reduced [2Fe-2S]-[ferredoxin] + 2 S-adenosyl-L-methionine = 2-methyladenosine(37) in tRNA + 5'-deoxyadenosine + L-methionine + 2 oxidized [2Fe-2S]-[ferredoxin] + S-adenosyl-L-homocysteine. Specifically methylates position 2 of adenine 2503 in 23S rRNA and position 2 of adenine 37 in tRNAs. This is Probable dual-specificity RNA methyltransferase RlmN from Alkaliphilus metalliredigens (strain QYMF).